The following is a 396-amino-acid chain: MSKYKRIFTIVIDSLGIGAMNDSEKYGDVNVDTLGHIAESVDTFNIPNLQKMGIANLHPIKHVAPVENPIGYQAKMAEASVGKDTMTGHWEMMGLHITKPFKTFTDTGFPQELLDELTERTGHKIVGNKSASGTEILDELGEHQIATGDMIVYTSADSVLQICGQEETFGLEELYRCCEIARELTLKDEWKVGRIIARPYLGTKKGEFKRTSNRHDYALKPYGRTVLNELKDNNFDVISVGKIKDIFDGEGITEGNKSKSSVHGMEQTLEIMDRDFTGFCFVNLVDFDALWGHRRNPQGYAEELEKFDVNLGKVLEKLHEDDLLIITADHGNDPTYTGTDHTREYVPFLAYSPSMKGHGQLETPKTFATIGATIADNFGLKMPEGTIGESVLNKLV.

Aspartate 13, aspartate 288, histidine 293, aspartate 329, histidine 330, and histidine 341 together coordinate Mn(2+).

This sequence belongs to the phosphopentomutase family. The cofactor is Mn(2+).

The protein resides in the cytoplasm. The enzyme catalyses 2-deoxy-alpha-D-ribose 1-phosphate = 2-deoxy-D-ribose 5-phosphate. The catalysed reaction is alpha-D-ribose 1-phosphate = D-ribose 5-phosphate. The protein operates within carbohydrate degradation; 2-deoxy-D-ribose 1-phosphate degradation; D-glyceraldehyde 3-phosphate and acetaldehyde from 2-deoxy-alpha-D-ribose 1-phosphate: step 1/2. Its function is as follows. Isomerase that catalyzes the conversion of deoxy-ribose 1-phosphate (dRib-1-P) and ribose 1-phosphate (Rib-1-P) to deoxy-ribose 5-phosphate (dRib-5-P) and ribose 5-phosphate (Rib-5-P), respectively. The protein is Phosphopentomutase of Clostridium perfringens (strain 13 / Type A).